Here is a 212-residue protein sequence, read N- to C-terminus: MILDDESQILGIDEAGRGSVIGPLVIGGVLMKKKKIRFLNRIGVKDSKQLNMKKRTIISRKIKKIAQFKTIIIPAHTIDEKRNNDINLNEIETEGMEEIIKIMKPNACYIDCIDVRENRFHDKIQKINPNMTVVTEHKADETYKIVSAASIIAKVERDKQLEIIRQEYGSVGSGYPSDKNTINYLKTIKNNQFPPIIRKTWKTIENITKSTE.

In terms of domain architecture, RNase H type-2 spans 7–212 (SQILGIDEAG…TIENITKSTE (206 aa)). The a divalent metal cation site is built by Asp13, Glu14, and Asp111.

This sequence belongs to the RNase HII family. The cofactor is Mn(2+). It depends on Mg(2+) as a cofactor.

The protein resides in the cytoplasm. The enzyme catalyses Endonucleolytic cleavage to 5'-phosphomonoester.. Endonuclease that specifically degrades the RNA of RNA-DNA hybrids. The chain is Ribonuclease HII from Methanosphaera stadtmanae (strain ATCC 43021 / DSM 3091 / JCM 11832 / MCB-3).